We begin with the raw amino-acid sequence, 710 residues long: Adenylosuccinate synthetase (710 aa).

The segment at 1 to 54 (MPVRRYGGRYNSSSPGVSNALNPSRTAGWPLSPSPATGSKPASTHHDPVPQEAY) is disordered. Residues 10 to 25 (YNSSSPGVSNALNPSR) show a composition bias toward polar residues. A compositionally biased stretch (basic and acidic residues) spans 44 to 54 (THHDPVPQEAY). GTP is bound by residues 180-186 (GDEGKGK) and 210-212 (GHT). Asp181 serves as the catalytic Proton acceptor. Residues Asp181 and Gly210 each contribute to the Mg(2+) site. Residues 181–184 (DEGK), 208–211 (NAGH), Thr295, Lys309, Gln421, Thr437, and Lys567 contribute to the IMP site. Residue His211 is the Proton donor of the active site. 563 to 569 (AVTKKPR) lines the substrate pocket. Residues Arg569 and 697–699 (GNG) contribute to the GTP site.

Belongs to the adenylosuccinate synthetase family. Homodimer. The cofactor is Mg(2+).

Its subcellular location is the cytoplasm. It carries out the reaction IMP + L-aspartate + GTP = N(6)-(1,2-dicarboxyethyl)-AMP + GDP + phosphate + 2 H(+). It participates in purine metabolism; AMP biosynthesis via de novo pathway; AMP from IMP: step 1/2. Its function is as follows. Plays an important role in the salvage pathway for purine nucleotide biosynthesis. Catalyzes the first committed step in the biosynthesis of AMP from IMP. The protein is Adenylosuccinate synthetase of Leishmania major.